The sequence spans 779 residues: Phosphoribosylformylglycinamidine synthase subunit PurL (779 aa).

Residue His-52 is part of the active site. Residues Tyr-55 and Lys-94 each coordinate ATP. A Mg(2+)-binding site is contributed by Glu-96. Residues 97 to 100 (SHNH) and Arg-119 each bind substrate. His-98 (proton acceptor) is an active-site residue. Residue Asp-120 participates in Mg(2+) binding. Gln-243 contributes to the substrate binding site. A Mg(2+)-binding site is contributed by Asp-271. 315–317 (ESQ) contacts substrate. The ATP site is built by Asn-523 and Gly-560. Residue Asn-561 participates in Mg(2+) binding. Ser-563 contacts substrate.

The protein belongs to the FGAMS family. Monomer. Part of the FGAM synthase complex composed of 1 PurL, 1 PurQ and 2 PurS subunits.

It is found in the cytoplasm. The catalysed reaction is N(2)-formyl-N(1)-(5-phospho-beta-D-ribosyl)glycinamide + L-glutamine + ATP + H2O = 2-formamido-N(1)-(5-O-phospho-beta-D-ribosyl)acetamidine + L-glutamate + ADP + phosphate + H(+). It functions in the pathway purine metabolism; IMP biosynthesis via de novo pathway; 5-amino-1-(5-phospho-D-ribosyl)imidazole from N(2)-formyl-N(1)-(5-phospho-D-ribosyl)glycinamide: step 1/2. Functionally, part of the phosphoribosylformylglycinamidine synthase complex involved in the purines biosynthetic pathway. Catalyzes the ATP-dependent conversion of formylglycinamide ribonucleotide (FGAR) and glutamine to yield formylglycinamidine ribonucleotide (FGAM) and glutamate. The FGAM synthase complex is composed of three subunits. PurQ produces an ammonia molecule by converting glutamine to glutamate. PurL transfers the ammonia molecule to FGAR to form FGAM in an ATP-dependent manner. PurS interacts with PurQ and PurL and is thought to assist in the transfer of the ammonia molecule from PurQ to PurL. The chain is Phosphoribosylformylglycinamidine synthase subunit PurL from Prochlorococcus marinus (strain MIT 9215).